The following is a 215-amino-acid chain: Protein-L-isoaspartate O-methyltransferase (215 aa).

The active site involves Ser-62.

This sequence belongs to the methyltransferase superfamily. L-isoaspartyl/D-aspartyl protein methyltransferase family.

The protein resides in the cytoplasm. It carries out the reaction [protein]-L-isoaspartate + S-adenosyl-L-methionine = [protein]-L-isoaspartate alpha-methyl ester + S-adenosyl-L-homocysteine. Functionally, catalyzes the methyl esterification of L-isoaspartyl residues in peptides and proteins that result from spontaneous decomposition of normal L-aspartyl and L-asparaginyl residues. It plays a role in the repair and/or degradation of damaged proteins. This chain is Protein-L-isoaspartate O-methyltransferase, found in Nitratidesulfovibrio vulgaris (strain DSM 19637 / Miyazaki F) (Desulfovibrio vulgaris).